Consider the following 205-residue polypeptide: Pectinesterase inhibitor 3 (205 aa).

The N-terminal stretch at 1–25 is a signal peptide; that stretch reads MAPTQNLFLVAIAFAVIFTASTVHG. Intrachain disulfides connect Cys38–Cys47 and Cys104–Cys156.

This sequence belongs to the PMEI family. As to expression, expressed in apical meristem.

It localises to the secreted. The protein resides in the extracellular space. Its subcellular location is the apoplast. Functionally, pectin methylesterase (PME) inhibitor that can target PMEs (e.g. PME2 and PME3) in a pH-dependent manner, mainly in slightly acidic conditions (pH 6.3 and 5.0) but not at pH 7.5; this processus relies on changes in the protonation of amino acids involved in intermolecular and intramolecular interactions. Regulates de-methylesterification of pectins in the apical meristem and affects primordia formation and phyllotactic patterning. The sequence is that of Pectinesterase inhibitor 3 from Arabidopsis thaliana (Mouse-ear cress).